A 1383-amino-acid polypeptide reads, in one-letter code: DNA-directed RNA polymerase subunit beta (1383 aa).

The protein belongs to the RNA polymerase beta chain family. The RNAP catalytic core consists of 2 alpha, 1 beta, 1 beta' and 1 omega subunit. When a sigma factor is associated with the core the holoenzyme is formed, which can initiate transcription.

It carries out the reaction RNA(n) + a ribonucleoside 5'-triphosphate = RNA(n+1) + diphosphate. In terms of biological role, DNA-dependent RNA polymerase catalyzes the transcription of DNA into RNA using the four ribonucleoside triphosphates as substrates. The polypeptide is DNA-directed RNA polymerase subunit beta (Xanthomonas axonopodis pv. citri (strain 306)).